The primary structure comprises 499 residues: Tetrathionate hydrolase (499 aa).

The first 32 residues, 1-32 (MPSIVRNHGPHNKILLSALLLALFGWVPLASA), serve as a signal peptide directing secretion.

Belongs to the tetrathionate hydrolase family. In terms of assembly, homodimer.

It is found in the cell membrane. The enzyme catalyses tetrathionate + H2O = sulfur + thiosulfate + sulfate + H(+). Catalyzes the hydrolysis of tetrathionate to generate elemental sulfur, thiosulfate and sulfate. This chain is Tetrathionate hydrolase, found in Acidithiobacillus ferrooxidans (strain ATCC 23270 / DSM 14882 / CIP 104768 / NCIMB 8455) (Ferrobacillus ferrooxidans (strain ATCC 23270)).